The following is a 402-amino-acid chain: Multidrug resistance protein MdtH (402 aa).

Residues 1–12 (MSRVSQARNLGK) lie on the Cytoplasmic side of the membrane. Residues 13-33 (YFLLIDNMLVVLGFFVVFPLI) traverse the membrane as a helical segment. Over 34-98 (SIRFVDQMGW…GFATMGIAHE (65 aa)) the chain is Periplasmic. A helical transmembrane segment spans residues 99–116 (PWLLWFSCLLSGLGGTLF). The Cytoplasmic segment spans residues 117 to 138 (DPPRSALVVKLIRPQQRGRFFS). The chain crosses the membrane as a helical span at residues 139-159 (LLMMQDSAGAVIGALLGSWLL). Over 160–164 (QYDFR) the chain is Periplasmic. A helical membrane pass occupies residues 165–185 (LVCATGAVLFVLCAAFNAWLL). The Cytoplasmic portion of the chain corresponds to 186–213 (PAWKLSTVRTPVREGMTRVMRDKRFVTY). A helical membrane pass occupies residues 214–234 (VLTLAGYYMLAVQVMLMLPIM). Residues 235 to 243 (VNDVAGAPS) lie on the Periplasmic side of the membrane. The helical transmembrane segment at 244–264 (AVKWMYAIEACLSLTLLYPIA) threads the bilayer. The Cytoplasmic segment spans residues 265–276 (RWSEKHFRLEHR). A helical membrane pass occupies residues 277-297 (LMAGLLIMSLSMMPVGMVSGL). The Periplasmic segment spans residues 298 to 299 (QQ). A helical membrane pass occupies residues 300 to 320 (LFTLICLFYIGSIIAEPARET). The Cytoplasmic segment spans residues 321 to 339 (LSASLADARARGSYMGFSR). Residues 340-360 (LGLAIGGAIGYIGGGWLFDLG) traverse the membrane as a helical segment. Residues 361–367 (KSVHQPE) are Periplasmic-facing. The chain crosses the membrane as a helical span at residues 368–388 (LPWMMLGIIGIFTFLALGWQF). Topologically, residues 389 to 402 (SQKRAARRLLERDA) are cytoplasmic.

Belongs to the major facilitator superfamily. DHA1 family. MdtH (TC 2.A.1.2.21) subfamily.

The protein localises to the cell inner membrane. Functionally, confers resistance to norfloxacin and enoxacin. This is Multidrug resistance protein MdtH from Escherichia coli O157:H7.